The chain runs to 87 residues: CRISPR-associated endoribonuclease Cas2 (87 aa).

D8 serves as a coordination point for Mg(2+).

This sequence belongs to the CRISPR-associated endoribonuclease Cas2 protein family. Homodimer, forms a heterotetramer with a Cas1 homodimer. Mg(2+) is required as a cofactor.

Functionally, CRISPR (clustered regularly interspaced short palindromic repeat), is an adaptive immune system that provides protection against mobile genetic elements (viruses, transposable elements and conjugative plasmids). CRISPR clusters contain sequences complementary to antecedent mobile elements and target invading nucleic acids. CRISPR clusters are transcribed and processed into CRISPR RNA (crRNA). Functions as a ssRNA-specific endoribonuclease. Involved in the integration of spacer DNA into the CRISPR cassette. In Frankia alni (strain DSM 45986 / CECT 9034 / ACN14a), this protein is CRISPR-associated endoribonuclease Cas2.